Consider the following 32-residue polypeptide: Glutathione S-transferase 8.2 (32 aa).

Residue 21-22 (QS) coordinates glutathione.

Belongs to the GST superfamily. Alpha family. As to quaternary structure, homodimer. Post-translationally, the N-terminus is blocked.

The protein resides in the cytoplasm. It catalyses the reaction RX + glutathione = an S-substituted glutathione + a halide anion + H(+). In terms of biological role, conjugation of reduced glutathione to a wide number of exogenous and endogenous hydrophobic electrophiles. This is Glutathione S-transferase 8.2 from Dicentrarchus labrax (European seabass).